The primary structure comprises 402 residues: uncharacterized protein (402 aa).

The first 44 residues, 1 to 44 (MLEKNLLPEILLAIHMPLNKGLTRVKAIVIIIVVIIAVIAGVVG), serve as a signal peptide directing secretion. The tract at residues 53–79 (NSVTTSSSSTTTSSSLSSTSISSSTTN) is disordered.

The protein belongs to the bacterial solute-binding protein 1 family. WtpA subfamily.

This is an uncharacterized protein from Saccharolobus solfataricus (strain ATCC 35092 / DSM 1617 / JCM 11322 / P2) (Sulfolobus solfataricus).